Here is a 457-residue protein sequence, read N- to C-terminus: Siroheme synthase (457 aa).

Residues 1 to 204 (MDHLPIFCQL…NDQKAITETT (204 aa)) are precorrin-2 dehydrogenase /sirohydrochlorin ferrochelatase. NAD(+) contacts are provided by residues 22–23 (DV) and 43–44 (LA). Ser-128 bears the Phosphoserine mark. Residues 216-457 (GEVVLVGAGP…RDKLNWFSNH (242 aa)) are uroporphyrinogen-III C-methyltransferase. Pro-225 is an S-adenosyl-L-methionine binding site. Asp-248 functions as the Proton acceptor in the catalytic mechanism. Lys-270 functions as the Proton donor in the catalytic mechanism. Residues 301-303 (GGD), Ile-306, 331-332 (TA), Met-382, and Gly-411 contribute to the S-adenosyl-L-methionine site.

It in the N-terminal section; belongs to the precorrin-2 dehydrogenase / sirohydrochlorin ferrochelatase family. The protein in the C-terminal section; belongs to the precorrin methyltransferase family.

It carries out the reaction uroporphyrinogen III + 2 S-adenosyl-L-methionine = precorrin-2 + 2 S-adenosyl-L-homocysteine + H(+). The enzyme catalyses precorrin-2 + NAD(+) = sirohydrochlorin + NADH + 2 H(+). It catalyses the reaction siroheme + 2 H(+) = sirohydrochlorin + Fe(2+). Its pathway is cofactor biosynthesis; adenosylcobalamin biosynthesis; precorrin-2 from uroporphyrinogen III: step 1/1. It functions in the pathway cofactor biosynthesis; adenosylcobalamin biosynthesis; sirohydrochlorin from precorrin-2: step 1/1. It participates in porphyrin-containing compound metabolism; siroheme biosynthesis; precorrin-2 from uroporphyrinogen III: step 1/1. The protein operates within porphyrin-containing compound metabolism; siroheme biosynthesis; siroheme from sirohydrochlorin: step 1/1. Its pathway is porphyrin-containing compound metabolism; siroheme biosynthesis; sirohydrochlorin from precorrin-2: step 1/1. Its function is as follows. Multifunctional enzyme that catalyzes the SAM-dependent methylations of uroporphyrinogen III at position C-2 and C-7 to form precorrin-2 via precorrin-1. Then it catalyzes the NAD-dependent ring dehydrogenation of precorrin-2 to yield sirohydrochlorin. Finally, it catalyzes the ferrochelation of sirohydrochlorin to yield siroheme. The protein is Siroheme synthase of Escherichia coli (strain 55989 / EAEC).